Consider the following 957-residue polypeptide: Glycine dehydrogenase (decarboxylating) (957 aa).

Lys-708 carries the N6-(pyridoxal phosphate)lysine modification.

This sequence belongs to the GcvP family. The glycine cleavage system is composed of four proteins: P, T, L and H. The cofactor is pyridoxal 5'-phosphate.

The enzyme catalyses N(6)-[(R)-lipoyl]-L-lysyl-[glycine-cleavage complex H protein] + glycine + H(+) = N(6)-[(R)-S(8)-aminomethyldihydrolipoyl]-L-lysyl-[glycine-cleavage complex H protein] + CO2. Functionally, the glycine cleavage system catalyzes the degradation of glycine. The P protein binds the alpha-amino group of glycine through its pyridoxal phosphate cofactor; CO(2) is released and the remaining methylamine moiety is then transferred to the lipoamide cofactor of the H protein. The polypeptide is Glycine dehydrogenase (decarboxylating) (Escherichia coli (strain ATCC 8739 / DSM 1576 / NBRC 3972 / NCIMB 8545 / WDCM 00012 / Crooks)).